The sequence spans 502 residues: Tyrosine-protein kinase receptor old-1 (502 aa).

The first 19 residues, 1-19 (MKGTLIFVVFYSSYGFAHC), serve as a signal peptide directing secretion. Residues 20 to 58 (NTILRSSSLSRNFEDSLRRIPRSTDKDETGFEDSNVQEV) lie on the Extracellular side of the membrane. Residues 59–79 (IFILLYCLFVALAILICGLII) form a helical membrane-spanning segment. Residues 80–502 (FYNSRKRELR…WLSDEKHCDS (423 aa)) are Cytoplasmic-facing. Residues 99-140 (LLEPTSADHKRRNSSNIVPPEPTPYPITSGESDLRQTPSRLS) are disordered. The segment covering 127–140 (SGESDLRQTPSRLS) has biased composition (polar residues). The 299-residue stretch at 175 to 473 (ISKGRPLGSG…ELKTTSNEYF (299 aa)) folds into the Protein kinase domain. ATP contacts are provided by residues 181–189 (LGSGEFGII) and Lys-213. The Proton acceptor role is filled by Asp-321.

The protein belongs to the protein kinase superfamily. Tyr protein kinase family.

It localises to the cell membrane. The enzyme catalyses L-tyrosyl-[protein] + ATP = O-phospho-L-tyrosyl-[protein] + ADP + H(+). Functionally, receptor tyrosine kinase which plays a role in promoting longevity and resistance to stresses including UV irradiation and high temperatures, probably downstream of daf-16. This is Tyrosine-protein kinase receptor old-1 from Caenorhabditis elegans.